Here is a 217-residue protein sequence, read N- to C-terminus: 8-oxoguanine DNA glycosylase/AP lyase (217 aa).

Active-site residues include Lys-138 and Asp-157.

This sequence belongs to the type-2 OGG1 family.

It carries out the reaction 2'-deoxyribonucleotide-(2'-deoxyribose 5'-phosphate)-2'-deoxyribonucleotide-DNA = a 3'-end 2'-deoxyribonucleotide-(2,3-dehydro-2,3-deoxyribose 5'-phosphate)-DNA + a 5'-end 5'-phospho-2'-deoxyribonucleoside-DNA + H(+). Functionally, catalyzes the excision of an oxidatively damaged form of guanine (7,8-dihydro-8-oxoguanine = 8-oxoG) from DNA. Also cleaves the DNA backbone at apurinic/apyrimidinic sites (AP sites). The protein is 8-oxoguanine DNA glycosylase/AP lyase of Fusobacterium nucleatum subsp. nucleatum (strain ATCC 25586 / DSM 15643 / BCRC 10681 / CIP 101130 / JCM 8532 / KCTC 2640 / LMG 13131 / VPI 4355).